The primary structure comprises 495 residues: UDP-N-acetylmuramoyl-L-alanyl-D-glutamate--2,6-diaminopimelate ligase (495 aa).

Residues leucine 32 and serine 34 each contribute to the UDP-N-acetyl-alpha-D-muramoyl-L-alanyl-D-glutamate site. An ATP-binding site is contributed by 119–125 (GTNGKTT). UDP-N-acetyl-alpha-D-muramoyl-L-alanyl-D-glutamate contacts are provided by residues asparagine 160, 161–162 (TT), serine 188, glutamine 194, and arginine 196. Lysine 228 is modified (N6-carboxylysine). Residues arginine 390, 414–417 (DNPR), glycine 465, and glutamate 469 each bind meso-2,6-diaminopimelate. The Meso-diaminopimelate recognition motif signature appears at 414–417 (DNPR).

It belongs to the MurCDEF family. MurE subfamily. Mg(2+) serves as cofactor. Post-translationally, carboxylation is probably crucial for Mg(2+) binding and, consequently, for the gamma-phosphate positioning of ATP.

The protein resides in the cytoplasm. The catalysed reaction is UDP-N-acetyl-alpha-D-muramoyl-L-alanyl-D-glutamate + meso-2,6-diaminopimelate + ATP = UDP-N-acetyl-alpha-D-muramoyl-L-alanyl-gamma-D-glutamyl-meso-2,6-diaminopimelate + ADP + phosphate + H(+). The protein operates within cell wall biogenesis; peptidoglycan biosynthesis. In terms of biological role, catalyzes the addition of meso-diaminopimelic acid to the nucleotide precursor UDP-N-acetylmuramoyl-L-alanyl-D-glutamate (UMAG) in the biosynthesis of bacterial cell-wall peptidoglycan. In Vibrio cholerae serotype O1 (strain ATCC 39315 / El Tor Inaba N16961), this protein is UDP-N-acetylmuramoyl-L-alanyl-D-glutamate--2,6-diaminopimelate ligase.